A 100-amino-acid polypeptide reads, in one-letter code: Small ribosomal subunit protein uS14c (100 aa).

The interval 1 to 54 is disordered; it reads MARKSLIQRERKRQKLEQKFHSIRRSSKKEISKVSSLSGKWEIHGKLQSPPRNS.

This sequence belongs to the universal ribosomal protein uS14 family. In terms of assembly, part of the 30S ribosomal subunit.

The protein resides in the plastid. It localises to the chloroplast. Functionally, binds 16S rRNA, required for the assembly of 30S particles. This chain is Small ribosomal subunit protein uS14c, found in Piper cenocladum (Ant piper).